A 338-amino-acid chain; its full sequence is Solute carrier family 35 member G3 (338 aa).

The tract at residues 1–24 (MAGSHPYFNQPDSTHPSPPSAPPS) is disordered. The next 9 helical transmembrane spans lie at 37 to 57 (TSGL…VGPL), 67 to 87 (LPSL…ALLL), 105 to 125 (FFCA…VQVV), 160 to 180 (CGLL…LWTL), 185 to 205 (TGVY…ALSL), 221 to 241 (TVAF…LFVL), 250 to 270 (LLSW…FTCV), 281 to 301 (LVCA…YYML), and 305 to 325 (VAPS…IITA). An EamA 1 domain is found at 49–174 (LPAGFVGPLS…CILGLIIIVG (126 aa)). Residues 272 to 325 (YAVTKAHPALVCAVLHSEVVVALILQYYMLHETVAPSDIVAAGVVLGSIAIITA) enclose the EamA 2 domain.

Belongs to the SLC35G solute transporter family. In terms of tissue distribution, expressed in testis.

It localises to the membrane. The polypeptide is Solute carrier family 35 member G3 (SLC35G3) (Homo sapiens (Human)).